Reading from the N-terminus, the 214-residue chain is Large ribosomal subunit protein uL16 (214 aa).

Arg32 carries the post-translational modification Citrulline. A Glycyl lysine isopeptide (Lys-Gly) (interchain with G-Cter in SUMO2) cross-link involves residue Lys175. Lys188 is covalently cross-linked (Glycyl lysine isopeptide (Lys-Gly) (interchain with G-Cter in ubiquitin)).

This sequence belongs to the universal ribosomal protein uL16 family. As to quaternary structure, component of the large ribosomal subunit. Mature ribosomes consist of a small (40S) and a large (60S) subunit. The 40S subunit contains about 33 different proteins and 1 molecule of RNA (18S). The 60S subunit contains about 49 different proteins and 3 molecules of RNA (28S, 5.8S and 5S). Citrullinated by PADI4. In terms of processing, ufmylated by UFL1.

It is found in the cytoplasm. Functionally, component of the large ribosomal subunit. Plays a role in the formation of actively translating ribosomes. May play a role in the embryonic brain development. This chain is Large ribosomal subunit protein uL16, found in Rattus norvegicus (Rat).